The chain runs to 409 residues: Phosphoglycerate kinase (409 aa).

Substrate-binding positions include 22 to 24, R37, 60 to 63, R122, and R164; these read DLN and HLSR. ATP-binding positions include K215, E338, and 365 to 368; that span reads GGDS.

It belongs to the phosphoglycerate kinase family. Monomer.

Its subcellular location is the cytoplasm. It catalyses the reaction (2R)-3-phosphoglycerate + ATP = (2R)-3-phospho-glyceroyl phosphate + ADP. It participates in carbohydrate degradation; glycolysis; pyruvate from D-glyceraldehyde 3-phosphate: step 2/5. This chain is Phosphoglycerate kinase (pgk), found in Mycoplasma pneumoniae (strain ATCC 29342 / M129 / Subtype 1) (Mycoplasmoides pneumoniae).